We begin with the raw amino-acid sequence, 308 residues long: Putative cathepsin L 3 (308 aa).

An N-terminal signal peptide occupies residues 1–21; sequence MKQFLTAAIVTLLMTAGYYHL. The propeptide at 22-110 is activation peptide; that stretch reads QEDDTNDFER…GASLPEVQLE (89 aa). Cystine bridges form between C129-C170 and C254-C298. Active-site residues include H261 and N278.

Belongs to the peptidase C1 family.

The protein resides in the secreted. It carries out the reaction Specificity close to that of papain. As compared to cathepsin B, cathepsin L exhibits higher activity toward protein substrates, but has little activity on Z-Arg-Arg-NHMec, and no peptidyl-dipeptidase activity.. Its function is as follows. May be involved in extracellular digestion. This chain is Putative cathepsin L 3, found in Paramecium tetraurelia.